We begin with the raw amino-acid sequence, 318 residues long: Protein-methionine-sulfoxide reductase catalytic subunit MsrP (318 aa).

A signal peptide (tat-type signal) is located at residues 1 to 40 (MNRFTRYDVTPEAIFNQRRQIIKAMGLGAAALSLPNIGFA). Mo-molybdopterin contacts are provided by residues Asn-72, 75 to 76 (YE), Cys-130, Thr-165, Asn-217, Arg-222, and 233 to 235 (SIK).

It belongs to the MsrP family. In terms of assembly, heterodimer of a catalytic subunit (MsrP) and a heme-binding subunit (MsrQ). Mo-molybdopterin serves as cofactor. Predicted to be exported by the Tat system. The position of the signal peptide cleavage has not been experimentally proven.

The protein localises to the periplasm. The enzyme catalyses L-methionyl-[protein] + a quinone + H2O = L-methionyl-(S)-S-oxide-[protein] + a quinol. It carries out the reaction L-methionyl-[protein] + a quinone + H2O = L-methionyl-(R)-S-oxide-[protein] + a quinol. Functionally, part of the MsrPQ system that repairs oxidized periplasmic proteins containing methionine sulfoxide residues (Met-O), using respiratory chain electrons. Thus protects these proteins from oxidative-stress damage caused by reactive species of oxygen and chlorine generated by the host defense mechanisms. MsrPQ is essential for the maintenance of envelope integrity under bleach stress, rescuing a wide series of structurally unrelated periplasmic proteins from methionine oxidation. The catalytic subunit MsrP is non-stereospecific, being able to reduce both (R-) and (S-) diastereoisomers of methionine sulfoxide. The sequence is that of Protein-methionine-sulfoxide reductase catalytic subunit MsrP from Actinobacillus pleuropneumoniae serotype 5b (strain L20).